The following is a 201-amino-acid chain: 3-isopropylmalate dehydratase small subunit (201 aa).

Belongs to the LeuD family. LeuD type 1 subfamily. Heterodimer of LeuC and LeuD.

The enzyme catalyses (2R,3S)-3-isopropylmalate = (2S)-2-isopropylmalate. The protein operates within amino-acid biosynthesis; L-leucine biosynthesis; L-leucine from 3-methyl-2-oxobutanoate: step 2/4. Its function is as follows. Catalyzes the isomerization between 2-isopropylmalate and 3-isopropylmalate, via the formation of 2-isopropylmaleate. In Glaesserella parasuis serovar 5 (strain SH0165) (Haemophilus parasuis), this protein is 3-isopropylmalate dehydratase small subunit.